The sequence spans 152 residues: MENNEAPSPSGSNNNDFPILPPPPNANDNYNQFGDHQIRNNNAAQKKLQQTQAKVDEVVGIMRVNVEKVLERDQKLSELGERADQLEQGASQFEQQAGKLKRKQWWANMKMMIILGVIAVVLLIIVLVSVWPSSSDSGSGGGNKAITQAPPH.

Over residues 1–16 (MENNEAPSPSGSNNND) the composition is skewed to polar residues. The interval 1-30 (MENNEAPSPSGSNNNDFPILPPPPNANDNY) is disordered. Over 1–110 (MENNEAPSPS…KRKQWWANMK (110 aa)) the chain is Cytoplasmic. The region spanning 47 to 107 (KLQQTQAKVD…GKLKRKQWWA (61 aa)) is the v-SNARE coiled-coil homology domain. The chain crosses the membrane as a helical; Anchor for type IV membrane protein span at residues 111-130 (MMIILGVIAVVLLIIVLVSV). Over 131-152 (WPSSSDSGSGGGNKAITQAPPH) the chain is Vesicular. A disordered region spans residues 133 to 152 (SSSDSGSGGGNKAITQAPPH).

It belongs to the synaptobrevin family. Part of the SNARE core complex containing Snap25 and syntaxin. Post-translationally, ubiquitinated by gzl, regulating endocytic trafficking. In wing imaginal disks, ubiquitination by gzl promotes transcytosis of wingless (wg) to the basolateral surface. As to expression, not nervous system-specific; abundant in cells of the gut and Malpighian tubules.

It localises to the cytoplasmic vesicle. The protein resides in the secretory vesicle. The protein localises to the synaptic vesicle membrane. Its subcellular location is the cell membrane. In terms of biological role, involved in the targeting and/or fusion of transport vesicles to their target membrane. The sequence is that of Synaptobrevin from Drosophila melanogaster (Fruit fly).